The chain runs to 162 residues: Large ribosomal subunit protein uL15 (162 aa).

The span at 1–13 shows a compositional bias: basic and acidic residues; it reads MNLNELRDNEGSR. Residues 1 to 39 form a disordered region; that stretch reads MNLNELRDNEGSRYRKKRLGRGIGSGKGKTSGRGVKGQK. Residues 21–35 show a composition bias toward gly residues; the sequence is RGIGSGKGKTSGRGV.

The protein belongs to the universal ribosomal protein uL15 family. In terms of assembly, part of the 50S ribosomal subunit.

Functionally, binds to the 23S rRNA. The chain is Large ribosomal subunit protein uL15 from Gluconobacter oxydans (strain 621H) (Gluconobacter suboxydans).